Here is a 121-residue protein sequence, read N- to C-terminus: Huntingtin-interacting protein K (121 aa).

Over residues 1–13 (MATEGDVELELET) the composition is skewed to acidic residues. The disordered stretch occupies residues 1–75 (MATEGDVELE…EQKAKQEREK (75 aa)). Composition is skewed to basic and acidic residues over residues 20–47 (RPPE…EKEI) and 60–75 (GDRR…EREK). The residue at position 30 (S30) is a Phosphoserine. Residues 52–121 (LETAMSVIGD…VVEALIALTN (70 aa)) form a required for association with the NAA10-NAA15 complex region. The stretch at 62 to 107 (RRSREQKAKQEREKELAKVTIKKEDLELIMTEMEISRAAAERSLRE) forms a coiled coil.

In terms of assembly, component of the N-terminal acetyltransferase A (NatA)/HYPK complex at least composed of NAA10, NAA15 and HYPK, which has N-terminal acetyltransferase activity. Within the complex interacts with NAA10. Within the complex interacts with NAA15. Predominantly interacts with NAA15 in the NAA10-NAA15 complex (also called the NatA complex); the interaction with the NatA complex reduces the acetylation activity of the NatA complex. Interacts with HTT (via N-terminus). The NatA complex is required for HYPK stability and for reducing polyQ aggregation of HTT. Component of the N-terminal acetyltransferase E (NatE)/HYPK complex at least composed of NAA10, NAA15, NAA50 and HYPK. Within the complex interacts with NAA10 and NAA15. Does not interact with NAA50. Interaction with NAA15 reduces the capacity of NAA15 to interact with NAA50. Its capacity to interact with the NatA complex is reduced by NAA50. Does not interact with the N-terminal acetyltransferase B (NatB) complex component NAA25 or the N-terminal acetyltransferase C (NatC) complex component NAA35.

It localises to the nucleus. Its subcellular location is the cytoplasm. Its function is as follows. Component of several N-terminal acetyltransferase complexes. Inhibits the N-terminal acetylation activity of the N-terminal acetyltransferase NAA10-NAA15 complex (also called the NatA complex). Has chaperone-like activity preventing polyglutamine (polyQ) aggregation of HTT in neuronal cells probably while associated with the NatA complex. May play a role in the NatA complex-mediated N-terminal acetylation of PCNP. This Homo sapiens (Human) protein is Huntingtin-interacting protein K.